A 146-amino-acid chain; its full sequence is Large ribosomal subunit protein uL15 (146 aa).

A compositionally biased stretch (basic and acidic residues) spans 1 to 18 (MKLHELKPAEGSRKERNR). The tract at residues 1-54 (MKLHELKPAEGSRKERNRVGRGVATGNGKTSGRGHKGQKARSGGGVRPGFEGGQ) is disordered. Residues 42 to 52 (SGGGVRPGFEG) are compositionally biased toward gly residues.

It belongs to the universal ribosomal protein uL15 family. In terms of assembly, part of the 50S ribosomal subunit.

Its function is as follows. Binds to the 23S rRNA. In Staphylococcus aureus (strain Mu3 / ATCC 700698), this protein is Large ribosomal subunit protein uL15.